The chain runs to 251 residues: Capsid protein (251 aa).

The disordered stretch occupies residues 1–29; sequence MPKRDAPWRSMAGTSKVSRNANYSPRSGI. The short motif at 3 to 20 is the Bipartite nuclear localization signal element; it reads KRDAPWRSMAGTSKVSRN. Residues 12-25 are compositionally biased toward polar residues; sequence AGTSKVSRNANYSP. The Nuclear localization signal signature appears at 35-49; the sequence is KAAEWVNRPMYRKPR. A zinc finger lies at 63 to 80; it reads CEGPCKVQSFEQRHDILH. A Nuclear export signal motif is present at residues 96 to 117; that stretch reads ITHRVGKRFCVKSVYILGKIWM. A Bipartite nuclear localization signal motif is present at residues 195 to 242; it reads RRFWKVNNHVVYNHQEAGKYENHTENALLLYMACTHASNPVYATLKIR.

Belongs to the geminiviridae capsid protein family. Homomultimer. Binds to single-stranded and double-stranded viral DNA. Interacts (via nuclear localization signals) with host importin alpha-1a.

Its subcellular location is the virion. It is found in the host nucleus. Functionally, encapsidates the viral DNA into characteristic twinned ('geminate') particles. Binds the genomic viral ssDNA and shuttles it into and out of the cell nucleus. The CP of bipartite geminiviruses is not required for cell-to-cell or systemic movement. This Solanum tuberosum (Potato) protein is Capsid protein.